A 320-amino-acid chain; its full sequence is Malate dehydrogenase (320 aa).

NAD(+) is bound by residues 10-15 (GAGQIG) and Asp34. 2 residues coordinate substrate: Arg83 and Arg89. Residues Asn96 and 119 to 121 (ITN) each bind NAD(+). Substrate-binding residues include Asn121 and Arg152. His176 (proton acceptor) is an active-site residue.

Belongs to the LDH/MDH superfamily. MDH type 3 family.

It catalyses the reaction (S)-malate + NAD(+) = oxaloacetate + NADH + H(+). In terms of biological role, catalyzes the reversible oxidation of malate to oxaloacetate. The polypeptide is Malate dehydrogenase (Cereibacter sphaeroides (strain ATCC 17029 / ATH 2.4.9) (Rhodobacter sphaeroides)).